We begin with the raw amino-acid sequence, 205 residues long: MIGHIQGVLTSKQPPEVVLDVQGIGYEIQLPMTCFYQLPPVGETIKLITHFVVREDAQLLYGFISASERSLFRLLLKTQGVGPKLALAILSGMSADEFVMAVNQNDVTRLVKLPGVGKKTAERLVIEMRDRLKDWQPSTPFTDRAPLDSQGMDAREHPADARTDAISALQSLGYKENQAEKALQKVYSAEHNSETLIRLALKQLS.

Residues 1–64 form a domain I region; sequence MIGHIQGVLT…EDAQLLYGFI (64 aa). Positions 65–143 are domain II; it reads SASERSLFRL…DWQPSTPFTD (79 aa). The interval 136-157 is disordered; it reads QPSTPFTDRAPLDSQGMDAREH. Residues 144 to 156 form a flexible linker region; it reads RAPLDSQGMDARE. The segment at 157–205 is domain III; the sequence is HPADARTDAISALQSLGYKENQAEKALQKVYSAEHNSETLIRLALKQLS.

This sequence belongs to the RuvA family. As to quaternary structure, homotetramer. Forms an RuvA(8)-RuvB(12)-Holliday junction (HJ) complex. HJ DNA is sandwiched between 2 RuvA tetramers; dsDNA enters through RuvA and exits via RuvB. An RuvB hexamer assembles on each DNA strand where it exits the tetramer. Each RuvB hexamer is contacted by two RuvA subunits (via domain III) on 2 adjacent RuvB subunits; this complex drives branch migration. In the full resolvosome a probable DNA-RuvA(4)-RuvB(12)-RuvC(2) complex forms which resolves the HJ.

It is found in the cytoplasm. Functionally, the RuvA-RuvB-RuvC complex processes Holliday junction (HJ) DNA during genetic recombination and DNA repair, while the RuvA-RuvB complex plays an important role in the rescue of blocked DNA replication forks via replication fork reversal (RFR). RuvA specifically binds to HJ cruciform DNA, conferring on it an open structure. The RuvB hexamer acts as an ATP-dependent pump, pulling dsDNA into and through the RuvAB complex. HJ branch migration allows RuvC to scan DNA until it finds its consensus sequence, where it cleaves and resolves the cruciform DNA. This Idiomarina loihiensis (strain ATCC BAA-735 / DSM 15497 / L2-TR) protein is Holliday junction branch migration complex subunit RuvA.